A 335-amino-acid polypeptide reads, in one-letter code: Luciferase-like monooxygenase (335 aa).

To bacterial alkanal monooxygenase alpha and beta chains.

The polypeptide is Luciferase-like monooxygenase (yhbW) (Escherichia coli O6:H1 (strain CFT073 / ATCC 700928 / UPEC)).